Reading from the N-terminus, the 263-residue chain is Proliferating cell nuclear antigen (263 aa).

The DNA-binding element occupies 61–80 (RCDRNLSMGMNLNNMAKMLR).

It belongs to the PCNA family. Homotrimer. Interacts with FEN1A. Interacts with POLL. Interacts with RAD/GEN1. Interacts with DJA7 and DJA8. Expressed in proliferating tissues. Expressed in roots and root apex. Expressed at low levels in young leaves. Not detected in mature leaves. Highly expressed in shoot apical meristem (SAM). Expressed in flag leaves and panicles.

The protein resides in the nucleus. This protein is an auxiliary protein of DNA polymerase delta and is involved in the control of eukaryotic DNA replication by increasing the polymerase's processibility during elongation of the leading strand. The sequence is that of Proliferating cell nuclear antigen from Oryza sativa subsp. japonica (Rice).